The chain runs to 477 residues: Aspartyl/glutamyl-tRNA(Asn/Gln) amidotransferase subunit B (477 aa).

Belongs to the GatB/GatE family. GatB subfamily. Heterotrimer of A, B and C subunits.

The enzyme catalyses L-glutamyl-tRNA(Gln) + L-glutamine + ATP + H2O = L-glutaminyl-tRNA(Gln) + L-glutamate + ADP + phosphate + H(+). The catalysed reaction is L-aspartyl-tRNA(Asn) + L-glutamine + ATP + H2O = L-asparaginyl-tRNA(Asn) + L-glutamate + ADP + phosphate + 2 H(+). Functionally, allows the formation of correctly charged Asn-tRNA(Asn) or Gln-tRNA(Gln) through the transamidation of misacylated Asp-tRNA(Asn) or Glu-tRNA(Gln) in organisms which lack either or both of asparaginyl-tRNA or glutaminyl-tRNA synthetases. The reaction takes place in the presence of glutamine and ATP through an activated phospho-Asp-tRNA(Asn) or phospho-Glu-tRNA(Gln). This is Aspartyl/glutamyl-tRNA(Asn/Gln) amidotransferase subunit B from Ureaplasma parvum serovar 3 (strain ATCC 27815 / 27 / NCTC 11736).